A 561-amino-acid polypeptide reads, in one-letter code: MRITIFLLLIILASAGAYAACPDWTPQQAQQEVAALENQLTRWDEAYWLHGENKVSDAVYDSMRQRLRAWQTCFALPVFNDAPVALAAGRTRHPVAHTGVQKLNDATSLSQWMHGKTDLWVQPKVDGVAVSLVYRKGKLQQVISRGDGERGEDWTARARHIPAIPLQVTGELADSVLQGELFLRQTGHRQQQDGGINARGQVAGAMMRSTVSSVLNDLDLFIWAWPDGPKAMEARLSTLAEGGFPLAQAWSKPVHSVSDVARLREQWFSEPLPFVTDGVVIREGREPPGKSWRPGEGSWVVAWKYPPAKQITEIKALRFAVGRTGKISVVAQLEPVTLDDKKVSKVSIGSLARWEKLDLAEGDQVEISLAGQGIPRLDAVIWRPTQRIKPVPPTARFDTLSCLYGTTGCEEQFISRLVWLSGKHVFDLAGMGEATWRQLSEHHHFEHLFSWLALSVDALKQTPGFSAQRAAQLWHQFNLTRQQPFQRWVKALGLPLPARDWQALTDDKWQQLQARDERSWQTLPGVGAERARQLVSYIHHPDIAALAEWLAAQRIDGFALP.

Lys124 functions as the N6-AMP-lysine intermediate in the catalytic mechanism.

Belongs to the NAD-dependent DNA ligase family. LigB subfamily.

It carries out the reaction NAD(+) + (deoxyribonucleotide)n-3'-hydroxyl + 5'-phospho-(deoxyribonucleotide)m = (deoxyribonucleotide)n+m + AMP + beta-nicotinamide D-nucleotide.. In terms of biological role, catalyzes the formation of phosphodiester linkages between 5'-phosphoryl and 3'-hydroxyl groups in double-stranded DNA using NAD as a coenzyme and as the energy source for the reaction. In Cronobacter sakazakii (strain ATCC BAA-894) (Enterobacter sakazakii), this protein is DNA ligase B.